A 162-amino-acid polypeptide reads, in one-letter code: uncharacterized protein (162 aa).

Transmembrane regions (helical) follow at residues 15-35 (VLAIFIVLLIISAYLGFAPAL), 43-63 (VCHFFVFFLLTLVFYWVFDLS), 70-90 (LTILVCGVFGGLGSEFVQSFL), and 97-117 (LFDIVANLLGCSLALLLNILY).

It localises to the membrane. This is an uncharacterized protein from Schizosaccharomyces pombe (strain 972 / ATCC 24843) (Fission yeast).